We begin with the raw amino-acid sequence, 415 residues long: Elongation factor Tu, chloroplastic (415 aa).

The 205-residue stretch at 13–217 (KIHLNVGTIG…HLDLYLPTPR (205 aa)) folds into the tr-type G domain. Residues 22–29 (GHFSHGKT) form a G1 region. Position 22–29 (22–29 (GHFSHGKT)) interacts with GTP. Position 29 (T29) interacts with Mg(2+). The G2 stretch occupies residues 63-67 (NMSIY). The interval 84–87 (DCPG) is G3. GTP is bound by residues 84 to 88 (DCPGH) and 139 to 142 (NKED). The interval 139–142 (NKED) is G4. The segment at 177 to 179 (SAL) is G5.

Belongs to the TRAFAC class translation factor GTPase superfamily. Classic translation factor GTPase family. EF-Tu/EF-1A subfamily.

It localises to the plastid. The protein localises to the chloroplast. The enzyme catalyses GTP + H2O = GDP + phosphate + H(+). Its function is as follows. GTP hydrolase that promotes the GTP-dependent binding of aminoacyl-tRNA to the A-site of ribosomes during protein biosynthesis. The protein is Elongation factor Tu, chloroplastic (tufA) of Coleochaete orbicularis (Charophycean green alga).